Consider the following 236-residue polypeptide: MTKRYWNIDLEEMMKAGVHFGHGTRKWNPKMAPYISAKRKGIHIINLTRTARFLSEACDLVFDAASRGKQFLIVGTKNKAADLVAWAAIRARCHYVNKKWLGGMLTNWSTTETRLHKFRDLRTEQKTGRLRRLPKRDAAVLKRQLSHLQTYLGGIKYMTGLPDIVIIIDQHEEYTALQECITLGIPTISLIDTNCDPDLADISIPANDDAISSIRLILNKLVFAIREGRSSYIRNP.

The protein belongs to the universal ribosomal protein uS2 family.

It is found in the plastid. The protein localises to the chloroplast. The chain is Small ribosomal subunit protein uS2c (rps2) from Daucus carota (Wild carrot).